The sequence spans 398 residues: Enoyl-[acyl-carrier-protein] reductase [NADH] (398 aa).

NAD(+)-binding positions include 48 to 53 (GASTGY), 74 to 75 (FE), 111 to 112 (DG), and 139 to 140 (LA). Tyr-225 contacts substrate. Tyr-235 serves as the catalytic Proton donor. NAD(+) is bound by residues Lys-244 and 273-275 (VVT).

This sequence belongs to the TER reductase family. As to quaternary structure, monomer.

The enzyme catalyses a 2,3-saturated acyl-[ACP] + NAD(+) = a (2E)-enoyl-[ACP] + NADH + H(+). It participates in lipid metabolism; fatty acid biosynthesis. In terms of biological role, involved in the final reduction of the elongation cycle of fatty acid synthesis (FAS II). Catalyzes the reduction of a carbon-carbon double bond in an enoyl moiety that is covalently linked to an acyl carrier protein (ACP). The sequence is that of Enoyl-[acyl-carrier-protein] reductase [NADH] from Variovorax paradoxus (strain S110).